Consider the following 435-residue polypeptide: MSSPGTESAGKSLQYRVDHLLSAVENELQAGSEKGDPTERELRVGLEESELWLRFKELTNEMIVTKNGRRMFPVLKVNVSGLDPNAMYSFLLDFVAADNHRWKYVNGEWVPGGKPEPQAPSCVYIHPDSPNFGAHWMKAPVSFSKVKLTNKLNGGGQIMLNSLHKYEPRIHIVRVGGPQRMITSHCFPETQFIAVTAYQNEEITALKIKYNPFAKAFLDAKERSDHKEMMEEPGDSQQPGYSQWGWLLPGTSTLCPPANPHPQFGGALSLPSTHSCDRYPTLRSHRSSPYPSPYAHRNNSPTYSDNSPACLSMLQSHDNWSSLGMPAHPSMLPVSHNASPPTSSSQYPSLWSVSNGAVTPGSQAAAVSNGLGAQFFRGSPAHYTPLTHPVSAPSSSGSPLYEGAAAATDIVDSQYDAAAQGRLIASWTPVSPPSM.

Positions 51 to 219 form a DNA-binding region, T-box; sequence LWLRFKELTN…YNPFAKAFLD (169 aa). Residues 279-308 form a disordered region; that stretch reads YPTLRSHRSSPYPSPYAHRNNSPTYSDNSP. Polar residues predominate over residues 297 to 308; sequence RNNSPTYSDNSP.

As to quaternary structure, monomer. In terms of tissue distribution, detected in testis, but not in other, normal tissues. Detected in lung tumors (at protein level).

The protein resides in the nucleus. Involved in the transcriptional regulation of genes required for mesoderm formation and differentiation. Binds to a palindromic T site 5'-TTCACACCTAGGTGTGAA-3' DNA sequence and activates gene transcription when bound to such a site. This Homo sapiens (Human) protein is T-box transcription factor T.